The chain runs to 134 residues: Protein NrdI (134 aa).

It belongs to the NrdI family.

Its function is as follows. Probably involved in ribonucleotide reductase function. The sequence is that of Protein NrdI from Rhizobium etli (strain CIAT 652).